We begin with the raw amino-acid sequence, 151 residues long: Large ribosomal subunit protein bL9 (151 aa).

Belongs to the bacterial ribosomal protein bL9 family.

In terms of biological role, binds to the 23S rRNA. This chain is Large ribosomal subunit protein bL9, found in Thermosipho melanesiensis (strain DSM 12029 / CIP 104789 / BI429).